A 30-amino-acid polypeptide reads, in one-letter code: Brevinin-2Rj (30 aa).

A disulfide bridge links cysteine 24 with cysteine 30.

Expressed by the skin glands.

It localises to the secreted. Its function is as follows. Antimicrobial peptide. This is Brevinin-2Rj from Pelophylax ridibundus (Marsh frog).